The chain runs to 2286 residues: DNA polymerase epsilon catalytic subunit A (2286 aa).

Residues 1 to 30 form a disordered region; it reads MSLRSGGRRRADPGADGEASRDDGATSSVS. Residues 9–24 are compositionally biased toward basic and acidic residues; that stretch reads RRADPGADGEASRDDG. 4 positions are modified to phosphoserine: Ser1184, Ser1297, Ser1317, and Ser1940. The disordered stretch occupies residues 1939–1969; sequence DSQKAGGAEDEQENEDDEEERDGEEEEEAEE. The segment covering 1946–1969 has biased composition (acidic residues); that stretch reads AEDEQENEDDEEERDGEEEEEAEE. Zn(2+) contacts are provided by Cys2158, Cys2161, Cys2187, and Cys2190. The CysA-type zinc-finger motif lies at 2158 to 2190; it reads CRSCNFCRDLDLCKDSSFSEDGAVLPQWLCSNC. Residues Cys2221, Cys2224, Cys2236, and Cys2238 each contribute to the [4Fe-4S] cluster site. The short motif at 2221–2238 is the CysB motif element; sequence CLKCRGVKETSMPVYCSC.

This sequence belongs to the DNA polymerase type-B family. As to quaternary structure, component of the DNA polymerase epsilon complex consisting of four subunits: the catalytic subunit POLE and the accessory subunits POLE2, POLE3 and POLE4. Interacts with RAD17 and TOPBP1.

Its subcellular location is the nucleus. It catalyses the reaction DNA(n) + a 2'-deoxyribonucleoside 5'-triphosphate = DNA(n+1) + diphosphate. Its function is as follows. Catalytic component of the DNA polymerase epsilon complex. Participates in chromosomal DNA replication. Required during synthesis of the leading DNA strands at the replication fork, binds at/or near replication origins and moves along DNA with the replication fork. Has 3'-5' proofreading exonuclease activity that corrects errors arising during DNA replication. Involved in DNA synthesis during DNA repair. Along with DNA polymerase POLD1 and DNA polymerase POLK, has a role in excision repair (NER) synthesis following UV irradiation. The sequence is that of DNA polymerase epsilon catalytic subunit A from Homo sapiens (Human).